The sequence spans 674 residues: DNA ligase (674 aa).

NAD(+) contacts are provided by residues 35-39 (DAEYD), 82-83 (SL), and E116. K118 acts as the N6-AMP-lysine intermediate in catalysis. Positions 139, 174, 282, and 306 each coordinate NAD(+). Residues C400, C403, C418, and C424 each coordinate Zn(2+). The BRCT domain occupies 593–674 (SYVSLIHGKT…WLQYIQPNKV (82 aa)).

Belongs to the NAD-dependent DNA ligase family. LigA subfamily. Mg(2+) serves as cofactor. Requires Mn(2+) as cofactor.

It carries out the reaction NAD(+) + (deoxyribonucleotide)n-3'-hydroxyl + 5'-phospho-(deoxyribonucleotide)m = (deoxyribonucleotide)n+m + AMP + beta-nicotinamide D-nucleotide.. Functionally, DNA ligase that catalyzes the formation of phosphodiester linkages between 5'-phosphoryl and 3'-hydroxyl groups in double-stranded DNA using NAD as a coenzyme and as the energy source for the reaction. It is essential for DNA replication and repair of damaged DNA. This Ehrlichia ruminantium (strain Welgevonden) protein is DNA ligase.